Reading from the N-terminus, the 475-residue chain is Sulfate adenylyltransferase subunit 1 (475 aa).

Positions K25–R239 constitute a tr-type G domain. The segment at G34 to S41 is G1. G34–S41 contacts GTP. Positions G92–D96 are G2. Residues D113–G116 form a G3 region. Residues D113–H117 and N168–D171 contribute to the GTP site. A G4 region spans residues N168–D171. Residues S206–L208 form a G5 region.

Belongs to the TRAFAC class translation factor GTPase superfamily. Classic translation factor GTPase family. CysN/NodQ subfamily. Heterodimer composed of CysD, the smaller subunit, and CysN.

The catalysed reaction is sulfate + ATP + H(+) = adenosine 5'-phosphosulfate + diphosphate. It participates in sulfur metabolism; hydrogen sulfide biosynthesis; sulfite from sulfate: step 1/3. In terms of biological role, with CysD forms the ATP sulfurylase (ATPS) that catalyzes the adenylation of sulfate producing adenosine 5'-phosphosulfate (APS) and diphosphate, the first enzymatic step in sulfur assimilation pathway. APS synthesis involves the formation of a high-energy phosphoric-sulfuric acid anhydride bond driven by GTP hydrolysis by CysN coupled to ATP hydrolysis by CysD. The polypeptide is Sulfate adenylyltransferase subunit 1 (Escherichia coli (strain 55989 / EAEC)).